An 84-amino-acid polypeptide reads, in one-letter code: Gomesin-like peptide (84 aa).

Residues 1 to 23 form the signal peptide; it reads MNRTRALVCLFLAVLILAHESEA. Position 24 is a pyrrolidone carboxylic acid (Q24). Intrachain disulfides connect C25/C38 and C29/C34. Residue R41 is modified to Arginine amide. Positions 42–84 are excised as a propeptide; that stretch reads GKRSVEEPSGGAQVVEKRAVDDADIPSAVEERELDEEESIEFR.

In terms of tissue distribution, expressed by the venom gland.

The protein localises to the secreted. In terms of biological role, antibacterial peptide. The chain is Gomesin-like peptide from Hadronyche infensa (Fraser island funnel-web spider).